We begin with the raw amino-acid sequence, 388 residues long: Norsolorinic acid reductase A (388 aa).

Residue Asp69 coordinates NADP(+). Tyr74 functions as the Proton donor in the catalytic mechanism. A substrate-binding site is contributed by His148. NADP(+) is bound by residues 178 to 179, Gln204, 233 to 243, and 300 to 308; these read SD, GVLGRGQFRSA, and RKVEHLKEN.

It belongs to the aldo/keto reductase family. Aldo/keto reductase 2 subfamily.

The protein operates within mycotoxin biosynthesis; aflatoxin biosynthesis. Functionally, norsolorinic acid reductase; part of the gene cluster that mediates the biosynthesis of aflatoxins, a group of polyketide-derived furanocoumarins, and part of the most toxic and carcinogenic compounds among the known mycotoxins. The four major aflatoxins produced by A.parasiticus are aflatoxin B1 (AFB1), aflatoxin B2 (AFB2), aflatoxin G1 (AFG1) and aflatoxin G2 (AFG2). Within the aflatoxin pathway, the norsolorinic acid reductase aflE may play a role in the conversion of norsolorinic acid (NOR) to averantin (AVN). The biosynthesis of aflatoxins begins with the norsolorinic acid synthase aflC that combines a hexanoyl starter unit produced by the fatty acid synthase aflA/aflB and 7 malonyl-CoA extender units to synthesize the precursor NOR. The second step is the conversion of NOR to averantin and requires the norsolorinic acid ketoreductase aflD, which catalyzes the dehydration of norsolorinic acid to form (1'S)-averantin. The norsolorinic acid reductases aflE and aflF may also play a role in the conversion of NOR to AVN. The cytochrome P450 monooxygenase aflG then catalyzes the hydroxylation of AVN to 5'hydroxyaverantin (HAVN). The next step is performed by the 5'-hydroxyaverantin dehydrogenase aflH that transforms HAVN to 5'-oxoaverantin (OAVN) which is further converted to averufin (AVF) by aflK that plays a dual role in the pathway, as a 5'-oxoaverantin cyclase that mediates conversion of 5'-oxoaverantin, as well as a versicolorin B synthase in a later step in the pathway. The averufin oxidase aflI catalyzes the conversion of AVF to versiconal hemiacetal acetate (VHA). VHA is then the substrate for the versiconal hemiacetal acetate esterase aflJ to yield versiconal (VAL). Versicolorin B synthase aflK then converts VAL to versicolorin B (VERB) by closing the bisfuran ring of aflatoxin which is required for DNA-binding, thus giving to aflatoxin its activity as a mutagen. Then, the activity of the versicolorin B desaturase aflL leads to versicolorin A (VERA). A branch point starts from VERB since it can also be converted to dihydrodemethylsterigmatocystin (DMDHST), probably also by aflL, VERA being a precursor for aflatoxins B1 and G1, and DMDHST for aflatoxins B2 and G2. Next, the versicolorin reductase aflM and the cytochrome P450 monooxygenase aflN are involved in conversion of VERA to demethylsterigmatocystin (DMST). AflX and aflY seem also involved in this step, through probable aflX-mediated epoxide ring-opening step following versicolorin A oxidation and aflY-mediated Baeyer-Villiger oxidation required for the formation of the xanthone ring. The methyltransferase aflO then leads to the modification of DMST to sterigmatocystin (ST), and of DMDHST to dihydrosterigmatocystin (DHST). Both ST and DHST are then substrates of the O-methyltransferase aflP to yield O-methylsterigmatocystin (OMST) and dihydro-O-methylsterigmatocystin (DHOMST), respectively. Finally OMST is converted to aflatoxins B1 and G1, and DHOMST to aflatoxins B2 and G2, via the action of several enzymes including O-methylsterigmatocystin oxidoreductase aflQ, the cytochrome P450 monooxygenase aflU, but also the NADH-dependent flavin oxidoreductase nadA which is specifically required for the synthesis of AFG1. The polypeptide is Norsolorinic acid reductase A (Aspergillus parasiticus (strain ATCC 56775 / NRRL 5862 / SRRC 143 / SU-1)).